The primary structure comprises 255 residues: Thiazole synthase (255 aa).

Lysine 96 (schiff-base intermediate with DXP) is an active-site residue. Residues glycine 157, 183-184 (AG), and 205-206 (NT) contribute to the 1-deoxy-D-xylulose 5-phosphate site.

Belongs to the ThiG family. Homotetramer. Forms heterodimers with either ThiH or ThiS.

The protein resides in the cytoplasm. The enzyme catalyses [ThiS sulfur-carrier protein]-C-terminal-Gly-aminoethanethioate + 2-iminoacetate + 1-deoxy-D-xylulose 5-phosphate = [ThiS sulfur-carrier protein]-C-terminal Gly-Gly + 2-[(2R,5Z)-2-carboxy-4-methylthiazol-5(2H)-ylidene]ethyl phosphate + 2 H2O + H(+). Its pathway is cofactor biosynthesis; thiamine diphosphate biosynthesis. Its function is as follows. Catalyzes the rearrangement of 1-deoxy-D-xylulose 5-phosphate (DXP) to produce the thiazole phosphate moiety of thiamine. Sulfur is provided by the thiocarboxylate moiety of the carrier protein ThiS. In vitro, sulfur can be provided by H(2)S. This chain is Thiazole synthase, found in Bacillus pumilus (strain SAFR-032).